A 226-amino-acid chain; its full sequence is MRVLVAIDGPAGAGKSTIAKLVAKKFNLMYIDTGAMYRAITYLAQNKNITPSNVEGLCNLINSISMYFKDDKIIVNGEDLSEEIRKPNVSSNVSLYASVLEVRTLLVDIQKDLACKYEVVMDGRDIGTVVMPHAPFKFFLTATPEIRADRRYKELKEKSQKVEYKNILEEIIKRDYIDSNRKVSPLKKAKDAIEIDTTNYHIEEVVDKISKLIESTIIKEKGRITK.

Residue 9–17 (GPAGAGKST) participates in ATP binding.

The protein belongs to the cytidylate kinase family. Type 1 subfamily.

The protein resides in the cytoplasm. The enzyme catalyses CMP + ATP = CDP + ADP. The catalysed reaction is dCMP + ATP = dCDP + ADP. The sequence is that of Cytidylate kinase from Clostridium tetani (strain Massachusetts / E88).